Reading from the N-terminus, the 135-residue chain is Early nodulin-5 (135 aa).

Residues 1 to 23 form the signal peptide; that stretch reads MASSSSPIFLMIIFSMWLLFSYS.

In terms of tissue distribution, invasion zone and early symbiotic zone.

In terms of biological role, involved in the infection process during the plant-rhizobium interaction. The sequence is that of Early nodulin-5 (ENOD5) from Pisum sativum (Garden pea).